The sequence spans 398 residues: Pectate lyase 1 (398 aa).

The signal sequence occupies residues 1–25 (MGIKHCCYILYFTLALVTLLQPVRS). N-linked (GlcNAc...) asparagine glycosylation is present at N37. A disulfide bond links C55 and C72. Residues D195, D219, and D223 each coordinate Ca(2+). The active site involves R275.

It belongs to the polysaccharide lyase 1 family. Amb a subfamily. In terms of assembly, monomer. Ca(2+) serves as cofactor. The N-terminus is blocked. Pollen and flowers.

The catalysed reaction is Eliminative cleavage of (1-&gt;4)-alpha-D-galacturonan to give oligosaccharides with 4-deoxy-alpha-D-galact-4-enuronosyl groups at their non-reducing ends.. Its pathway is glycan metabolism; pectin degradation; 2-dehydro-3-deoxy-D-gluconate from pectin: step 2/5. Functionally, has pectate lyase activity. The sequence is that of Pectate lyase 1 from Ambrosia artemisiifolia (Common ragweed).